The following is a 366-amino-acid chain: Phospho-N-acetylmuramoyl-pentapeptide-transferase (366 aa).

10 consecutive transmembrane segments (helical) span residues 27–47, 71–91, 93–113, 134–154, 174–194, 205–225, 245–265, 268–288, 294–314, and 343–363; these read AALF…INSL, TPTM…LLWA, LSNV…AIGF, LGIE…TALA, FMIN…VGAG, GLAI…AYLA, LAVV…FNAP, AIFM…TVAV, IVMA…IIQV, and QVVI…LSTL.

Belongs to the glycosyltransferase 4 family. MraY subfamily. Mg(2+) serves as cofactor.

The protein resides in the cell inner membrane. It carries out the reaction UDP-N-acetyl-alpha-D-muramoyl-L-alanyl-gamma-D-glutamyl-meso-2,6-diaminopimeloyl-D-alanyl-D-alanine + di-trans,octa-cis-undecaprenyl phosphate = di-trans,octa-cis-undecaprenyl diphospho-N-acetyl-alpha-D-muramoyl-L-alanyl-D-glutamyl-meso-2,6-diaminopimeloyl-D-alanyl-D-alanine + UMP. Its pathway is cell wall biogenesis; peptidoglycan biosynthesis. Catalyzes the initial step of the lipid cycle reactions in the biosynthesis of the cell wall peptidoglycan: transfers peptidoglycan precursor phospho-MurNAc-pentapeptide from UDP-MurNAc-pentapeptide onto the lipid carrier undecaprenyl phosphate, yielding undecaprenyl-pyrophosphoryl-MurNAc-pentapeptide, known as lipid I. This Rhizobium leguminosarum bv. trifolii (strain WSM2304) protein is Phospho-N-acetylmuramoyl-pentapeptide-transferase.